The sequence spans 402 residues: MDRRVVITGIGGLCGLGTDAPSIWKEMREGRSAIGPIVTSELHGLTGTIGAEIKTLPEHDIDRKQLVTMDRFSLLAVLAAREAMRQAGLSCDERNAYRFGAIVGVGGSGWEAIEASYRALLLNGARRAGVMDVPKAMPSAAAGQVSMSLGLRGPVFGVTSACASANHAIASAVDQIRCGRADVMLAGGSDAPFVFCVVKAWEAMRVIAPDTCRPFSSDRRGLVLGEGAGMAVLESYEHATARGATIIAEIAGIGLSADAFNLVSPAVEGPEAAMRACLADAGLNVQDVDYINAHGTGTKANDRMETEAIKRVFGGHANSMSISSTKSMHAHCLGAASALEMIACVMAIQEGVVPPTANYREPDPDCDLDVTPNVARERKVRVALSNAFAMAGMNAVLAFRQV.

Residues 2–401 (DRRVVITGIG…GMNAVLAFRQ (400 aa)) enclose the Ketosynthase family 3 (KS3) domain. Residues cysteine 162, histidine 294, and histidine 331 each act as for beta-ketoacyl synthase activity in the active site. A helical membrane pass occupies residues 329 to 348 (HAHCLGAASALEMIACVMAI).

It belongs to the thiolase-like superfamily. Beta-ketoacyl-ACP synthases family.

It localises to the cell inner membrane. Its function is as follows. Proposed to synthesize NOD factor fatty acyl chain. Involved in the synthesis of a highly unsaturated fatty acid moiety, which forms part of a lipo-oligosaccharide that is responsible for host specificity. The chain is Nodulation protein E (nodE) from Rhizobium sp. (strain N33).